The sequence spans 332 residues: NADH-quinone oxidoreductase subunit H (332 aa).

The next 9 membrane-spanning stretches (helical) occupy residues 4 to 24 (FAFFALEALIKCIIIIAIFAS), 44 to 64 (IGPDMVGPFGLIQLVADMIKL), 78 to 98 (FIFAIAPLISAICAFVSLAAI), 120 to 140 (VALLFVIGTSGLCFYAVFLGG), 165 to 185 (VGALALIAIVMLVGSFSLVDI), 194 to 214 (FSWLIFKQPLAFVLFIIALFI), 255 to 275 (IAGAILVTLLFLGGFNSFWII), 279 to 299 (IMMIVKSSFIFFWYFWARAAF), and 312 to 332 (YLILIPLAVLNLLITALAVLL).

This sequence belongs to the complex I subunit 1 family. In terms of assembly, NDH-1 is composed of 14 different subunits. Subunits NuoA, H, J, K, L, M, N constitute the membrane sector of the complex.

Its subcellular location is the cell inner membrane. It carries out the reaction a quinone + NADH + 5 H(+)(in) = a quinol + NAD(+) + 4 H(+)(out). Its function is as follows. NDH-1 shuttles electrons from NADH, via FMN and iron-sulfur (Fe-S) centers, to quinones in the respiratory chain. The immediate electron acceptor for the enzyme in this species is believed to be ubiquinone. Couples the redox reaction to proton translocation (for every two electrons transferred, four hydrogen ions are translocated across the cytoplasmic membrane), and thus conserves the redox energy in a proton gradient. This subunit may bind ubiquinone. The sequence is that of NADH-quinone oxidoreductase subunit H from Campylobacter jejuni (strain RM1221).